Consider the following 128-residue polypeptide: Nitrogen fixation nifHD region GlnB-like protein 2 (128 aa).

It belongs to the P(II) protein family.

Its function is as follows. Could be involved in the regulation of nitrogen fixation. This is Nitrogen fixation nifHD region GlnB-like protein 2 (glnBB) from Methanothermococcus thermolithotrophicus (Methanococcus thermolithotrophicus).